Consider the following 97-residue polypeptide: Large ribosomal subunit protein eL21 (97 aa).

This sequence belongs to the eukaryotic ribosomal protein eL21 family.

The protein is Large ribosomal subunit protein eL21 of Methanosarcina barkeri (strain Fusaro / DSM 804).